The following is a 30-amino-acid chain: U-actitoxin-Bcg2a (30 aa).

Cys7 and Cys27 form a disulfide bridge.

It localises to the secreted. The protein resides in the nematocyst. Possible voltage-gated potassium channel (Kv) blocker. In Bunodosoma cangicum (Sea anemone), this protein is U-actitoxin-Bcg2a.